The sequence spans 662 residues: Methyl-accepting chemotaxis protein McpB (662 aa).

The Cytoplasmic segment spans residues 1 to 16 (MKTFINWLKKPSISKK). Residues 17–37 (LIVSFIAILIIPILILEFSSY) traverse the membrane as a helical segment. Residues 38–282 (RSASGKLDQE…IKDASKSVLT (245 aa)) lie on the Extracellular side of the membrane. The Cache domain maps to 153–229 (VTDPYVAASD…KAGEKLSGDW (77 aa)). A helical membrane pass occupies residues 283 to 303 (TGMIVLIASIVAGGILILFIV). Residues 304-356 (RSITKPLKRLVQSSKTISRGDLTETIEIHSKDELGELGESFNEMGQSLRSLIS) form the HAMP domain. Residues 304 to 662 (RSITKPLKRL…RDLTKQFKIE (359 aa)) lie on the Cytoplasmic side of the membrane. Residues Gln-371 and Gln-595 each carry the glutamate methyl ester (Gln) modification. A Methyl-accepting transducer domain is found at 375–611 (SAGQTSKATE…HVSAAVSGIA (237 aa)). Glu-630 and Glu-637 each carry glutamate methyl ester (Glu).

This sequence belongs to the methyl-accepting chemotaxis (MCP) protein family. Interacts with FloT. Some glutamine residues are deamidated to glutamate by CheD and subsequently methylated. Post-translationally, the demethylation is selective. Gln-371 is demethylated only upon asparagine addition whereas Glu-637 is demethylated only upon asparagine removal. Glu-630 appears indiscriminate and is demethylated upon both addition and removal of asparagine.

Its subcellular location is the cell membrane. The protein localises to the membrane raft. In terms of biological role, chemotactic-signal transducers respond to changes in the concentration of attractants and repellents in the environment, transduce a signal from the outside to the inside of the cell, and facilitate sensory adaptation through the variation of the level of methylation. All amino acids serve as attractants in B.subtilis, they appear to cause an increase in the turnover methyl groups, leading to methylation of an unidentified acceptor, while repellents have been shown to cause a decrease in methyl group turnover. The methyl groups are added by a methyltransferase and removed by a methylesterase. McpB is required for taxis towards asparagine, aspartate, glutamine, and histidine. This chain is Methyl-accepting chemotaxis protein McpB (mcpB), found in Bacillus subtilis (strain 168).